A 2210-amino-acid chain; its full sequence is MSPSLVVPVFAGHGTTAINSTSLRERAAADASSPSGALLLDACHYAFNVELSTLSPSEALAVGINPDHFTDPKSLLLLPSHEHYLTNSVVTAATLFLVQTLRYLASVQASSSTSFASSLQTNSEHGLGIVGFSSGILPACVAGSSATTLEFISNAVETFRLAFWIGVRLQIHKASVQTPELLGESPLPWSLAFLGMSHAAAESAIQSFLKSFEGTPELRVTSVVSETSVTISGRPDILAAFAAQLPLSGPVHKTTVDALYHSSSHHDGVRSQVLADVIRRNIRFPTHADIKVPVRSTYSGELLSKGSEGSASFVEQVVDMILTQPVNWDKVTEALVRATPEGTVVHLLNFGPGAGLTKGIERYFPSNKVSSTDLSSEPVHTSTLQMPSSVQEPIAICGMSVNMPGAPSVAKLWEVLEKGINTVSEVPEHRFKVSDYNDPKKKGRTMGAHTGNFIDEPDAFDNKFFNISPREARSMDPQQRVLLHTAYEALEDAGYVPNSTPTNNPETFGCYVGVATNDYVQNLRNDIDVYYSTGTLRAFLSGRISYALQFSGPSIVVDTACSSSLIAVYQACRALMNRDCNAAVAGGVNVISSPDMFLGLDRGHFLSPTGQCKAFDASADGYSRSEGCGIFVLKRLSDAVTENDQILGVIRGVEVNQSGNAYSITRPHAPTQENLFTQALERSGLDASRISVVEAHGTGTQAGDPIELESIRGIFAKHRKANNPLHITSVKANIGHLEAASGAAALAKLLLMLRHRTIPRLVSLKNLNPRIKPLASDNVIIDTKQVAWTVPDESLPRVALLNNFGAAGSNGALLLEEYIPKSSGKDTDVASTFIVGLSAKNEQVLVDLRASYIEYLRSPASAGVTLADIAYTATARRRIFSHRFAVTARSKEELTHKLELASGKTVSDNAPGKVVFVFSGQGGQYLGMGSALYKTSALFKNAIDECEYFLKKNNFPGVLPIITSDGESSGLTPVEEFEANQAAIFALEYGLAKLWMSWGVTPTAVVGHSLGEYAAHVITGVLSLESALTLVAHRVRIMMRTCELDTTGMIAINLGSGAVTDILSSSPDFSGISIACYNSATDCVASGPIGQLDALKAHLDKAVHCKSVRLKVPFGYHSSAMQPLLEEFGALAKRVTVHAPKIPVISNPLGRVIREGDKSTFNAEYYLSHCADPVQFESGISALIDDASFADIAAWIELGPHPTTLPMLTVHRGVSKEALLVGSLKKRQDDGLTLSSSLSQLYTSNVPVRWRDVFADVSAACVSLPSYPWQKSKFWVAWKEDSPAPASSTEGSPASTKAFNPVNDFGMLQSWAQFPSAANSQIAIFETPISLLKTSITGHIVGDVPLCPASVYHELALAGIEASKAHLSLPLQGSHSALFNIDYVKPLVYSKDVARVIKTTIAMNTDGSGSFTVESYADSEAESVHCSGQFRPLLVVDTTTKFNRMAPVVSRRTAAICSGEDGEAEVFTTRTAYEIIFTRVVRYAKEYHTMKNVTISKNGMEGYAVVKLPKDHDKSKFVVHPVFMDTMLHVAGFLANMQGGDNDAYICSKVKSVKAVPSLINNDATYGVFVVNAWVESEGMMLSDAIAVDISGHGQIVAQLKGMCFKKLRLNTLQRSLAMHAGHTAPAPAQKRSVAAAPKPKITEVAPALEPRSSPAKRSVDVQNTVLNIVGDTCGIEISALDVNADLETYGVDSLMSIEILRKFEESFPQMQFDATIFSTCNNITELVREISSTVGSQAATAVNTPETASTPEPTLQGDASQSTDVRSILLELISSFTGFEISNFDLNADADTAYGLDKFLFIPLFSKLQTFFPDITLDPTKPSVCSTIGELLDEVTAQVQAGPSSPSSDLVDTKPMFVSVLGLDESDIQDDTEFETIGLDSLTAIEALHAIQTEYGLELPSNLFELHTTAKAVNQYISSKRPGKSPKQVEETAMDPDREEDLSDLTPEQVQSVVRVLRLDEVPMSVQKSSSSGSPLFLFHDGSGAVNYLRRLGSVDREFWGFNNPNYATGKPWGSVEAMASAYADYAVKVAGSRPVIFGGWSFGGVVGFEAARQLMRRGVPVKGVVLIDSPFPVDHVPSSNEFMAVTAGAFTRGGRTPIGRMMWKQLQQNAPLLKTYDPRIAGGPYPPLVLLHNKEGIPPDAFLPYPVPRWMSEKGTDPCLLADDWSGLVGAPIKVIHLPGTHFTTFATPHLGAVTQALVDGCAYLDGL.

The segment at 38–261 (LLLDACHYAF…HKTTVDALYH (224 aa)) is N-terminal acylcarrier protein transacylase domain (SAT). Residues 391–817 (QEPIAICGMS…GSNGALLLEE (427 aa)) form the Ketosynthase family 3 (KS3) domain. Residues C561, H696, and H736 each act as for beta-ketoacyl synthase activity in the active site. Residues 915–1240 (VFVFSGQGGQ…GLTLSSSLSQ (326 aa)) form a malonyl-CoA:ACP transacylase (MAT) domain region. The For acyl/malonyl transferase activity role is filled by S1009. Residues 1307 to 1437 (MLQSWAQFPS…GQFRPLLVVD (131 aa)) are N-terminal hotdog fold. In terms of domain architecture, PKS/mFAS DH spans 1307–1614 (MLQSWAQFPS…FKKLRLNTLQ (308 aa)). Positions 1336–1611 (ITGHIVGDVP…GMCFKKLRLN (276 aa)) are product template (PT) domain. H1339 acts as the Proton acceptor; for dehydratase activity in catalysis. The tract at residues 1464–1614 (AEVFTTRTAY…FKKLRLNTLQ (151 aa)) is C-terminal hotdog fold. D1525 functions as the Proton donor; for dehydratase activity in the catalytic mechanism. The Carrier 1 domain maps to 1660 to 1735 (VDVQNTVLNI…ELVREISSTV (76 aa)). Residue S1694 is modified to O-(pantetheine 4'-phosphoryl)serine. Residues 1739–1761 (AATAVNTPETASTPEPTLQGDAS) are disordered. In terms of domain architecture, Carrier 2 spans 1845-1922 (SSPSSDLVDT…AVNQYISSKR (78 aa)). The residue at position 1882 (S1882) is an O-(pantetheine 4'-phosphoryl)serine. Residues 1920–1946 (SKRPGKSPKQVEETAMDPDREEDLSDL) form a disordered region. A compositionally biased stretch (acidic residues) spans 1933–1944 (TAMDPDREEDLS). Residues 1963 to 2202 (VPMSVQKSSS…LGAVTQALVD (240 aa)) form a thioesterase (TE) domain region.

Its pathway is secondary metabolite biosynthesis. Non-reducing polyketide synthase, part of the gene cluster that mediates the biosynthesis of melleolides, a range of antifungal and phytotoxic polyketide derivatives composed of an orsellinic acid (OA) moiety esterified to various sesquiterpene alcohols. The first step in melleolides biosynthesis is performed by the delta(6)-protoilludene synthase PRO1 which catalyzes the cyclization of farnesyl diphosphate to protoilludene. The orsellinic acid synthase armB produces OA by condensing acetyl-CoA with 3 malonyl-CoA units in a three-round chain elongation reaction folowed by a C2-C7 ring closure. ArmB further catalyzes the trans-esterification of OA to the various sesquiterpene alcohols resulting from the hydroxylation of protoilludene. The melleolides cluster also includes 5 cytochrome P450 monooxygenases, 4 NAD(+)-dependent oxidoreductases, one flavin-dependent oxidoreductase, and one O-methyltransferase. The cytochrome P450 monooxygenases may be involved in protoilludene hydroxylation to elaborate melleolides with multiple alcohol groups, such as melleolide D, which carries alcohol functionalities at C-4, C-5, C-10, and C-13. The role of the NAD(+)-dependent enzymes remains unknown. Numerous melleolides, including arnamial, show 5'-O-methylation of the aromatic moiety which may be catalyzed by the methyltransferase encoded in the cluster. The flavin-dependent oxidoreductase might represent the dehydrogenase yielding the aldehyde in position 1 of arnamial and other melleolides. Finally, several halogenase localized outside of the cluster (armH1 to armH5), are able to catalyze the transfer of a single chlorine atom to the melleolide backbone, resulting in a 6'-chloromelleolide product. In Armillaria ostoyae (Armillaria root rot fungus), this protein is Orsellinic acid synthase ArmB.